Reading from the N-terminus, the 1020-residue chain is Sodium/potassium-transporting ATPase subunit alpha-2 (1020 aa).

The propeptide occupies 1 to 5 (MGRGA). The tract at residues 1–31 (MGRGAGREYSPAATTAENGGGKKKQKEKELD) is disordered. Residues 6–85 (GREYSPAATT…NALTPPPTTP (80 aa)) lie on the Cytoplasmic side of the membrane. At Ser-10 the chain carries Phosphoserine. The tract at residues 80–82 (PPP) is interaction with phosphoinositide-3 kinase. A helical membrane pass occupies residues 86–106 (EWVKFCRQLFGGFSILLWIGA). The Extracellular portion of the chain corresponds to 107-129 (LLCFLAYGILAAMEDEPSNDNLY). A helical membrane pass occupies residues 130–150 (LGIVLAAVVIVTGCFSYYQEA). At 151-286 (KSSKIMDSFK…VGQTPIAMEI (136 aa)) the chain is on the cytoplasmic side. Positions 212 to 227 (DNSSLTGESEPQTRSP) are enriched in polar residues. A disordered region spans residues 212-231 (DNSSLTGESEPQTRSPEFTH). A helical membrane pass occupies residues 287–306 (EHFIQLITGVAVFLGVSFFV). The Extracellular segment spans residues 307-318 (LSLILGYSWLEA). The helical transmembrane segment at 319–336 (VIFLIGIIVANVPEGLLA) threads the bilayer. Residues 337 to 769 (TVTVCLTLTA…EEGRLIFDNL (433 aa)) lie on the Cytoplasmic side of the membrane. Residue Asp-374 is the 4-aspartylphosphate intermediate of the active site. Residues Ser-439, Ser-450, Ser-496, and Ser-559 each carry the phosphoserine modification. Thr-570 carries the post-translational modification Phosphothreonine. 2 positions are modified to phosphoserine: Ser-587 and Ser-672. The Mg(2+) site is built by Asp-714 and Asp-718. A helical transmembrane segment spans residues 770 to 789 (KKSIAYTLTSNIPEITPFLL). The Extracellular segment spans residues 790 to 799 (FIIANIPLPL). A helical membrane pass occupies residues 800–820 (GTVTILCIDLGTDMVPAISLA). Topologically, residues 821–840 (YEAAESDIMKRQPRNSQTDK) are cytoplasmic. A Phosphoserine modification is found at Ser-826. The helical transmembrane segment at 841-863 (LVNERLISMAYGQIGMIQALGGF) threads the bilayer. Residues 864–915 (FTYFVILAENGFLPSRLLGIRLDWDDRTTNDLEDSYGQEWTYEQRKVVEFTC) are Extracellular-facing. Residues 916–935 (HTAFFASIVVVQWADLIICK) form a helical membrane-spanning segment. At 936–948 (TRRNSVFQQGMKN) the chain is on the cytoplasmic side. Ser-940 is modified (phosphoserine; by PKA). The chain crosses the membrane as a helical span at residues 949–967 (KILIFGLLEETALAAFLSY). Over 968–982 (CPGMGVALRMYPLKV) the chain is Extracellular. Residues 983-1003 (TWWFCAFPYSLLIFIYDEVRK) form a helical membrane-spanning segment. The Cytoplasmic portion of the chain corresponds to 1004-1020 (LILRRYPGGWVEKETYY).

It belongs to the cation transport ATPase (P-type) (TC 3.A.3) family. Type IIC subfamily. The sodium/potassium-transporting ATPase is composed of a catalytic alpha subunit, an auxiliary non-catalytic beta subunit and an additional regulatory subunit. Interacts with regulatory subunit FXYD1.

The protein localises to the membrane. It is found in the cell membrane. It carries out the reaction K(+)(out) + Na(+)(in) + ATP + H2O = K(+)(in) + Na(+)(out) + ADP + phosphate + H(+). In terms of biological role, this is the catalytic component of the active enzyme, which catalyzes the hydrolysis of ATP coupled with the exchange of sodium and potassium ions across the plasma membrane. This action creates the electrochemical gradient of sodium and potassium ions, providing the energy for active transport of various nutrients. The sequence is that of Sodium/potassium-transporting ATPase subunit alpha-2 (Atp1a2) from Mus musculus (Mouse).